The primary structure comprises 376 residues: Probable sister chromatid cohesion protein DCC1 (376 aa).

The tract at residues 213–232 is disordered; sequence QKSPTNSGGGGEEIKGGGGD. The segment covering 219 to 232 has biased composition (gly residues); that stretch reads SGGGGEEIKGGGGD.

The protein belongs to the DCC1 family.

It localises to the nucleus. Loads PCNA onto primed templates regulating velocity, spacing and restart activity of replication forks. May couple DNA replication to sister chromatid cohesion. The sequence is that of Probable sister chromatid cohesion protein DCC1 from Dictyostelium discoideum (Social amoeba).